The sequence spans 1087 residues: Ubiquitin-associated protein 2-like (1087 aa).

Met1 is subject to N-acetylmethionine. The tract at residues 1–33 (MMTSVGTNRARGNWEQPQNQNQTQHKQRPQATA) is disordered. Positions 49 to 89 (DFEEKVKQLIDITGKNQDECVIALHDCNGDVNRAINVLLEG) constitute a UBA domain. The segment at 92–234 (DTHSWEMVGK…TGHFEPDDGT (143 aa)) is disordered. Over residues 118–132 (EEGKENRDRDRDYSR) the composition is skewed to basic and acidic residues. A compositionally biased stretch (basic residues) spans 133–145 (RRGGPPRRGRGAS). Arg187 and Arg190 each carry asymmetric dimethylarginine. A compositionally biased stretch (low complexity) spans 213–226 (NYGNSSGNTWNNTG). Ser356 and Ser360 each carry phosphoserine. Positions 377 to 389 (AQHSQSGSTTTSS) are enriched in low complexity. The interval 377–420 (AQHSQSGSTTTSSWDMGSTTQSPSLVQYDLKNPSDSAVHSPFTK) is disordered. The span at 390-401 (WDMGSTTQSPSL) shows a compositional bias: polar residues. A phosphoserine mark is found at Ser410 and Ser416. At Thr425 the chain carries Phosphothreonine. Ser439, Ser454, Ser467, Ser470, Ser471, and Ser477 each carry phosphoserine. Disordered regions lie at residues 440 to 493 (PAVA…KKAS), 530 to 656 (SDYE…IPPL), and 669 to 794 (TNQH…LPPG). Composition is skewed to low complexity over residues 474 to 485 (QSSSPQPAQQKL) and 534 to 569 (STPT…SQES). The segment covering 570-656 (GYQSGPIQST…SPSTSSIPPL (87 aa)) has biased composition (polar residues). 4 positions are modified to phosphoserine: Ser604, Ser605, Ser608, and Ser609. The segment covering 688–784 (TTTTQHSSTL…STRSSVATTS (97 aa)) has biased composition (low complexity). Phosphoserine is present on residues Ser852 and Ser859. Residues 865–901 (FGRGDASSPAPATTLAQPQQNQTQTHHTTQQTFLNPA) form a disordered region. The span at 873–896 (PAPATTLAQPQQNQTQTHHTTQQT) shows a compositional bias: low complexity. Residues Ser962 and Val969 each carry the omega-N-methylarginine modification. N6-acetyllysine occurs at positions 969 and 976. The disordered stretch occupies residues 1040-1087 (QQPHSQILHHHLQQDGQTGSGQRSQTSSIPQKPQTNKSAYNSYSWGAN). The span at 1053–1067 (QDGQTGSGQRSQTSS) shows a compositional bias: low complexity. The segment covering 1068 to 1087 (IPQKPQTNKSAYNSYSWGAN) has biased composition (polar residues).

As to quaternary structure, interacts with BMI1. Part of a complex consisting of UBAP2L, BMI1 and RNF2. Interacts with G3BP1 (via NTF2 domain); promoting stress granule formation. Post-translationally, acetylated. As to expression, ubiquitous.

It is found in the nucleus. The protein resides in the chromosome. The protein localises to the cytoplasm. It localises to the stress granule. In terms of biological role, recruits the ubiquitination machinery to RNA polymerase II for polyubiquitination, removal and degradation, when the transcription-coupled nucleotide excision repair (TC-NER) machinery fails to resolve DNA damage. Plays an important role in the activity of long-term repopulating hematopoietic stem cells (LT-HSCs). Is a regulator of stress granule assembly, required for their efficient formation. Required for proper brain development and neocortex lamination. The chain is Ubiquitin-associated protein 2-like from Homo sapiens (Human).